Consider the following 184-residue polypeptide: Chaperone protein YcdY (184 aa).

Belongs to the TorD/DmsD family. In terms of assembly, interacts with YcdX.

Its function is as follows. Acts as a chaperone that increases YcdX activity, maybe by facilitating the correct insertion of the zinc ions into the catalytic site of YcdX. Involved in the swarming motility process. The polypeptide is Chaperone protein YcdY (ycdY) (Escherichia coli (strain K12)).